Here is a 411-residue protein sequence, read N- to C-terminus: Dual-specificity RNA methyltransferase RlmN (411 aa).

The active-site Proton acceptor is the Glu125. Residues 131-380 form the Radical SAM core domain; sequence EEGRGTLCVS…IRTPRGRDIL (250 aa). Cys138 and Cys383 are oxidised to a cystine. The [4Fe-4S] cluster site is built by Cys145, Cys149, and Cys152. S-adenosyl-L-methionine-binding positions include 209–210, Ser241, 263–265, and Asn340; these read GE and SLH. Cys383 (S-methylcysteine intermediate) is an active-site residue.

This sequence belongs to the radical SAM superfamily. RlmN family. [4Fe-4S] cluster is required as a cofactor.

It localises to the cytoplasm. The enzyme catalyses adenosine(2503) in 23S rRNA + 2 reduced [2Fe-2S]-[ferredoxin] + 2 S-adenosyl-L-methionine = 2-methyladenosine(2503) in 23S rRNA + 5'-deoxyadenosine + L-methionine + 2 oxidized [2Fe-2S]-[ferredoxin] + S-adenosyl-L-homocysteine. It carries out the reaction adenosine(37) in tRNA + 2 reduced [2Fe-2S]-[ferredoxin] + 2 S-adenosyl-L-methionine = 2-methyladenosine(37) in tRNA + 5'-deoxyadenosine + L-methionine + 2 oxidized [2Fe-2S]-[ferredoxin] + S-adenosyl-L-homocysteine. In terms of biological role, specifically methylates position 2 of adenine 2503 in 23S rRNA and position 2 of adenine 37 in tRNAs. m2A2503 modification seems to play a crucial role in the proofreading step occurring at the peptidyl transferase center and thus would serve to optimize ribosomal fidelity. The protein is Dual-specificity RNA methyltransferase RlmN of Brucella anthropi (strain ATCC 49188 / DSM 6882 / CCUG 24695 / JCM 21032 / LMG 3331 / NBRC 15819 / NCTC 12168 / Alc 37) (Ochrobactrum anthropi).